Reading from the N-terminus, the 398-residue chain is Argininosuccinate synthase (398 aa).

8 to 16 (AYSGGLDTS) contacts ATP. Tyr-87 is an L-citrulline binding site. Gly-117 provides a ligand contact to ATP. L-aspartate is bound by residues Thr-119, Asn-123, and Asp-124. Asn-123 contacts L-citrulline. L-citrulline-binding residues include Arg-127, Ser-175, Glu-259, and Tyr-271.

The protein belongs to the argininosuccinate synthase family. Type 1 subfamily. Homotetramer.

Its subcellular location is the cytoplasm. It carries out the reaction L-citrulline + L-aspartate + ATP = 2-(N(omega)-L-arginino)succinate + AMP + diphosphate + H(+). It functions in the pathway amino-acid biosynthesis; L-arginine biosynthesis; L-arginine from L-ornithine and carbamoyl phosphate: step 2/3. The chain is Argininosuccinate synthase from Corynebacterium kroppenstedtii (strain DSM 44385 / JCM 11950 / CIP 105744 / CCUG 35717).